A 241-amino-acid chain; its full sequence is E3 ubiquitin-protein ligase RNF166 (241 aa).

Positions 8 to 30 (VASSQHRQHHSHQSLATPSSADS) are disordered. The RING-type zinc finger occupies 37–77 (CPICLEVYYKPVAIGSCGHTFCGECLQPCLQVSSPLCPLCR). Residues C102, C105, H117, and C121 each coordinate Zn(2+). The C2HC RNF-type zinc-finger motif lies at 102 to 121 (CRGCSKKVTLAKMRAHISSC). The 17-residue stretch at 225–241 (DEEAALQAALALSLSEN) folds into the UIM domain.

It localises to the cytoplasm. It catalyses the reaction S-ubiquitinyl-[E2 ubiquitin-conjugating enzyme]-L-cysteine + [acceptor protein]-L-lysine = [E2 ubiquitin-conjugating enzyme]-L-cysteine + N(6)-ubiquitinyl-[acceptor protein]-L-lysine.. It participates in protein modification; protein ubiquitination. Its function is as follows. E3 ubiquitin-protein ligase that promotes the ubiquitination of different substrates. The protein is E3 ubiquitin-protein ligase RNF166 (rnf166) of Xenopus laevis (African clawed frog).